A 309-amino-acid chain; its full sequence is Taste receptor type 2 member 113 (309 aa).

Residues 1–10 lie on the Extracellular side of the membrane; the sequence is MVAVLQSTLP. A helical transmembrane segment spans residues 11–31; the sequence is IIFSMEFIMGTLGNGFIFLIV. The Cytoplasmic segment spans residues 32 to 55; the sequence is CIDWVQRRKISLVDQIRTALAISR. The chain crosses the membrane as a helical span at residues 56-76; sequence IALIWLIFLDWWVSVHYPALH. The Extracellular portion of the chain corresponds to 77 to 80; sequence ETGK. Residues 81–101 traverse the membrane as a helical segment; it reads MLSTYLISWTVINHCNFWLTA. Over 102–127 the chain is Cytoplasmic; sequence NLSILYFLKIANFSNIIFLYLKFRSK. The helical transmembrane segment at 128–148 threads the bilayer; it reads NVVLVTLLVSLFFLFLNTVII. Over 149 to 185 the chain is Extracellular; it reads KIFSDVCFDSVQRNVSQIFIMYNHEQICKFLSFTNPM. N162 is a glycosylation site (N-linked (GlcNAc...) asparagine). A helical membrane pass occupies residues 186-206; sequence FTFIPFVMSTVMFSLLIFSLW. Topologically, residues 207–229 are cytoplasmic; sequence RHLKNMQHTAKGCRDISTTVHIR. Residues 230–250 traverse the membrane as a helical segment; the sequence is ALQTIIVSVVLYTIFFLSFFV. Residues 251-262 are Extracellular-facing; sequence KVWSFVSPERYL. The helical transmembrane segment at 263-283 threads the bilayer; sequence IFLFVWALGNAVFSAHPFVMI. Over 284–309 the chain is Cytoplasmic; sequence LVNRRLRLASLSLIFWLWYRFKNIEV.

It belongs to the G-protein coupled receptor T2R family.

It localises to the membrane. Its function is as follows. Putative taste receptor which may play a role in the perception of bitterness. The chain is Taste receptor type 2 member 113 from Mus musculus (Mouse).